Consider the following 534-residue polypeptide: Protoheme IX farnesyltransferase (534 aa).

The interval Met1–Leu251 is unknown. 15 consecutive transmembrane segments (helical) span residues Pro17–Val37, Ala39–Ile59, Tyr83–Ile103, Leu128–Val148, Val163–Leu183, Leu197–Ala217, Gly261–Ile281, Leu284–Ile304, Ile339–Ile359, Leu360–Ser380, Ile384–Gly404, Leu411–Ile431, Ile457–Leu477, Trp479–Leu499, and Ala508–Val528. The tract at residues Lys252 to Arg530 is protoheme IX prenyltransferase.

It in the C-terminal section; belongs to the UbiA prenyltransferase family. Protoheme IX farnesyltransferase subfamily.

The protein localises to the cell membrane. It catalyses the reaction heme b + (2E,6E)-farnesyl diphosphate + H2O = Fe(II)-heme o + diphosphate. It functions in the pathway porphyrin-containing compound metabolism; heme O biosynthesis; heme O from protoheme: step 1/1. Converts heme B (protoheme IX) to heme O by substitution of the vinyl group on carbon 2 of heme B porphyrin ring with a hydroxyethyl farnesyl side group. The sequence is that of Protoheme IX farnesyltransferase (ctaB) from Roseiflexus sp. (strain RS-1).